The chain runs to 457 residues: Endo-1,3(4)-beta-glucanase ARB_04519 (457 aa).

The N-terminal stretch at 1–18 (MRTTGLLLLGALAELGSA) is a signal peptide. One can recognise a GH16 domain in the interval 19–319 (TYILEDDYQP…YMKVYQQGTA (301 aa)). Catalysis depends on glutamate 130, which acts as the Nucleophile. Residue glutamate 135 is the Proton donor of the active site. Asparagine 200 is a glycosylation site (N-linked (GlcNAc...) asparagine). The interval 318 to 397 (TAPTKPSQAP…DSCPPPTQPA (80 aa)) is disordered. The segment covering 333–352 (TPALPTMKSTSTVSSMVSAT) has biased composition (low complexity). Over residues 353–362 (QPAPTASNPT) the composition is skewed to polar residues. The span at 368-378 (PSSSSSNNGPQ) shows a compositional bias: low complexity.

It belongs to the glycosyl hydrolase 16 family.

The protein localises to the secreted. The enzyme catalyses Endohydrolysis of (1-&gt;3)- or (1-&gt;4)-linkages in beta-D-glucans when the glucose residue whose reducing group is involved in the linkage to be hydrolyzed is itself substituted at C-3.. In terms of biological role, mixed-linked glucanase involved in the degradation of complex natural cellulosic substrates. Active on laminarin. lichenan, soluble carboxymethyl cellulose but not on pustulan. The polypeptide is Endo-1,3(4)-beta-glucanase ARB_04519 (Arthroderma benhamiae (strain ATCC MYA-4681 / CBS 112371) (Trichophyton mentagrophytes)).